Consider the following 147-residue polypeptide: uncharacterized protein (147 aa).

It to M.jannaschii MJ1086 N-terminal region.

This is an uncharacterized protein from Methanocaldococcus jannaschii (strain ATCC 43067 / DSM 2661 / JAL-1 / JCM 10045 / NBRC 100440) (Methanococcus jannaschii).